Reading from the N-terminus, the 404-residue chain is 2,3-diketo-5-methylthiopentyl-1-phosphate enolase (404 aa).

Residue Lys91 is the Proton acceptor of the active site. Substrate is bound by residues Lys140, 166-169 (KDDE), His257, Gly329, and 351-352 (GG). Residues Lys166, Asp168, and Glu169 each contribute to the Mg(2+) site. N6-carboxylysine is present on Lys166.

This sequence belongs to the RuBisCO large chain family. Type IV subfamily. As to quaternary structure, homodimer. Requires Mg(2+) as cofactor.

It catalyses the reaction 5-methylsulfanyl-2,3-dioxopentyl phosphate = 2-hydroxy-5-methylsulfanyl-3-oxopent-1-enyl phosphate. It functions in the pathway amino-acid biosynthesis; L-methionine biosynthesis via salvage pathway; L-methionine from S-methyl-5-thio-alpha-D-ribose 1-phosphate: step 3/6. Functionally, catalyzes the enolization of 2,3-diketo-5-methylthiopentyl-1-phosphate (DK-MTP-1-P) into 2-hydroxy-3-keto-5-methylthiopentenyl-1-phosphate (HK-MTPenyl-1-P). The polypeptide is 2,3-diketo-5-methylthiopentyl-1-phosphate enolase (Bacillus velezensis (strain DSM 23117 / BGSC 10A6 / LMG 26770 / FZB42) (Bacillus amyloliquefaciens subsp. plantarum)).